A 466-amino-acid polypeptide reads, in one-letter code: MALFMAILGVLVLLLCLCSALLKWNEVRFRRKGLPPGAMGWPVFGETTEFLKQGPNFMKNKRARYGSFFKSHILGCPTIVSMDPELNRFILMNEAKGLVPGYPQSMLDILGTRNIAAVHGSTHKYMRGALLSIISPTLIRDQLLPKIDEFMRTHLMDWDNKVINIQEKTKEMAFLSSLKQIAGMESSSIAQPFMTEFFKLVLGTLSLPINLPRTNYRGGLQARKSIISILSRLLEERKASQDVHVDMLGCLMKKDENRYKLNDEEIIDLVITIMYSGYETVSTTSMMAVKYLHDHPKVLEEIRKEHFAIRERKKPEDPIDCNDLKSMRFTRAVIFETSRLATIVNGVLRKTTHDMELNGYLIPKGWRIYVYTREINYDPFLYHDPLTFNPWRWLGNSLESQSHFLIFGGGTRQCPGKELGIAEISTFLHYFVTRYRWEEVGGDKLMKFPRVVAPNGLHIRVSSFSN.

Residues alanine 2–leucine 22 traverse the membrane as a helical segment. Cysteine 414 contributes to the heme binding site.

This sequence belongs to the cytochrome P450 family. Heme serves as cofactor.

The protein localises to the membrane. In terms of biological role, catalyzes the C6-oxidation step in brassinosteroids biosynthesis. The chain is Cytochrome P450 85A from Phaseolus vulgaris (Kidney bean).